Reading from the N-terminus, the 82-residue chain is MVTIRLARHGAKKRPFYQIVVADSRNVATGRFIEKVGFFNPTAQGQEEGLRIDLDRVNHWVGQGASLSDRVAKLVKDAQKAA.

It belongs to the bacterial ribosomal protein bS16 family.

The protein is Small ribosomal subunit protein bS16 of Vibrio vulnificus (strain CMCP6).